We begin with the raw amino-acid sequence, 230 residues long: Ribosomal RNA small subunit methyltransferase Nep1 (230 aa).

Residues glycine 184, glycine 189, and isoleucine 205–leucine 210 each bind S-adenosyl-L-methionine.

It belongs to the class IV-like SAM-binding methyltransferase superfamily. RNA methyltransferase NEP1 family. As to quaternary structure, homodimer.

It catalyses the reaction a pseudouridine in rRNA + S-adenosyl-L-methionine = an N(1)-methylpseudouridine in rRNA + S-adenosyl-L-homocysteine + H(+). Methyltransferase involved in ribosomal biogenesis. Specifically catalyzes the N1-methylation of the pseudouridine corresponding to position 914 in M.jannaschii 16S rRNA. This Staphylothermus marinus (strain ATCC 43588 / DSM 3639 / JCM 9404 / F1) protein is Ribosomal RNA small subunit methyltransferase Nep1.